A 297-amino-acid chain; its full sequence is Light-independent protochlorophyllide reductase iron-sulfur ATP-binding protein (297 aa).

Residues 41-46 and lysine 70 each bind ATP; that span reads GIGKST. Serine 45 lines the Mg(2+) pocket. 2 residues coordinate [4Fe-4S] cluster: cysteine 126 and cysteine 160. Residues 211-212 and 235-237 each bind ATP; these read NR and PDL.

It belongs to the NifH/BchL/ChlL family. Homodimer. Protochlorophyllide reductase is composed of three subunits; BchL, BchN and BchB. The cofactor is [4Fe-4S] cluster.

The enzyme catalyses chlorophyllide a + oxidized 2[4Fe-4S]-[ferredoxin] + 2 ADP + 2 phosphate = protochlorophyllide a + reduced 2[4Fe-4S]-[ferredoxin] + 2 ATP + 2 H2O. Its pathway is porphyrin-containing compound metabolism; bacteriochlorophyll biosynthesis (light-independent). Its function is as follows. Component of the dark-operative protochlorophyllide reductase (DPOR) that uses Mg-ATP and reduced ferredoxin to reduce ring D of protochlorophyllide (Pchlide) to form chlorophyllide a (Chlide). This reaction is light-independent. The L component serves as a unique electron donor to the NB-component of the complex, and binds Mg-ATP. The polypeptide is Light-independent protochlorophyllide reductase iron-sulfur ATP-binding protein (Methylorubrum extorquens (strain PA1) (Methylobacterium extorquens)).